Consider the following 255-residue polypeptide: tRNA (guanine-N(1)-)-methyltransferase (255 aa).

Residues glycine 113 and 133-138 each bind S-adenosyl-L-methionine; that span reads IGDYVL.

This sequence belongs to the RNA methyltransferase TrmD family. As to quaternary structure, homodimer.

Its subcellular location is the cytoplasm. The catalysed reaction is guanosine(37) in tRNA + S-adenosyl-L-methionine = N(1)-methylguanosine(37) in tRNA + S-adenosyl-L-homocysteine + H(+). Specifically methylates guanosine-37 in various tRNAs. The polypeptide is tRNA (guanine-N(1)-)-methyltransferase (Shigella flexneri serotype 5b (strain 8401)).